The primary structure comprises 108 residues: Putative septation protein SpoVG (108 aa).

The interval 84–108 (FEKQSSVETEPVTEENMETAENENE) is disordered. A compositionally biased stretch (acidic residues) spans 94–108 (PVTEENMETAENENE).

It belongs to the SpoVG family.

In terms of biological role, could be involved in septation. The polypeptide is Putative septation protein SpoVG (Finegoldia magna (strain ATCC 29328 / DSM 20472 / WAL 2508) (Peptostreptococcus magnus)).